A 577-amino-acid chain; its full sequence is Phosphoethanolamine transferase EptC (577 aa).

The next 5 helical transmembrane spans lie at 17-37 (LGWA…IIYI), 44-64 (NGIR…FLFP), 69-89 (IIAA…LCYY), 119-139 (YFSL…VLLW), and 154-174 (VVSF…NTFI).

It belongs to the phosphoethanolamine transferase family. EptC/CptA subfamily. Forms a complex with an unidentified protein of approximately 36 kDa.

Its subcellular location is the cell inner membrane. The protein operates within bacterial outer membrane biogenesis; LPS core biosynthesis. Functionally, catalyzes the addition of a phosphoethanolamine moiety to the outer membrane lipopolysaccharide core. The sequence is that of Phosphoethanolamine transferase EptC (eptC) from Escherichia coli (strain K12).